A 242-amino-acid chain; its full sequence is Small ribosomal subunit protein uS3 (242 aa).

One can recognise a KH type-2 domain in the interval 39 to 110 (IRRFIHKKYG…QVRINVVEVE (72 aa)). The interval 217-242 (TMPVGASPRRRGNRRPQQFEDRSNEG) is disordered. Basic and acidic residues predominate over residues 233-242 (QQFEDRSNEG).

Belongs to the universal ribosomal protein uS3 family. As to quaternary structure, part of the 30S ribosomal subunit. Forms a tight complex with proteins S10 and S14.

Binds the lower part of the 30S subunit head. Binds mRNA in the 70S ribosome, positioning it for translation. The polypeptide is Small ribosomal subunit protein uS3 (Prochlorococcus marinus (strain MIT 9313)).